Reading from the N-terminus, the 369-residue chain is uncharacterized protein (369 aa).

At Lys-184 the chain carries N6-(pyridoxal phosphate)lysine.

Belongs to the class-V pyridoxal-phosphate-dependent aminotransferase family. Pyridoxal 5'-phosphate serves as cofactor.

This is an uncharacterized protein from Helicobacter pylori (strain ATCC 700392 / 26695) (Campylobacter pylori).